Here is a 175-residue protein sequence, read N- to C-terminus: Acetyl-CoA decarbonylase/synthase complex subunit epsilon 2 (175 aa).

The protein belongs to the CdhB family. As to quaternary structure, heterotetramer of two alpha and two epsilon subunits. The ACDS complex is made up of alpha, epsilon, beta, gamma and delta subunits with a probable stoichiometry of (alpha(2)epsilon(2))(4)-beta(8)-(gamma(1)delta(1))(8).

In terms of biological role, part of a complex that catalyzes the reversible cleavage of acetyl-CoA, allowing autotrophic growth from CO(2). The alpha-epsilon subcomponent functions as a carbon monoxide dehydrogenase. The precise role of the epsilon subunit is unclear; it may have a stabilizing role within the alpha(2)epsilon(2) component and/or be involved in electron transfer to FAD during a potential FAD-mediated CO oxidation. This Archaeoglobus fulgidus (strain ATCC 49558 / DSM 4304 / JCM 9628 / NBRC 100126 / VC-16) protein is Acetyl-CoA decarbonylase/synthase complex subunit epsilon 2 (cdhB2).